The chain runs to 478 residues: Ribosomal RNA small subunit methyltransferase F (478 aa).

Residues 121–127 (ASAPGSK), Glu145, Asp172, and Asp190 contribute to the S-adenosyl-L-methionine site. Cys243 (nucleophile) is an active-site residue.

Belongs to the class I-like SAM-binding methyltransferase superfamily. RsmB/NOP family.

It localises to the cytoplasm. The catalysed reaction is cytidine(1407) in 16S rRNA + S-adenosyl-L-methionine = 5-methylcytidine(1407) in 16S rRNA + S-adenosyl-L-homocysteine + H(+). Functionally, specifically methylates the cytosine at position 1407 (m5C1407) of 16S rRNA. The chain is Ribosomal RNA small subunit methyltransferase F from Shewanella woodyi (strain ATCC 51908 / MS32).